The chain runs to 500 residues: MPENFGYISQVIGSVVDVSYRYTSGGLPKINDALQITHSNGKVLIVEVQQHIGEDTVRAVAMDSTDGISRGMKAVNLGRPISMPIGNQVKGRLLNVIGETIDGMKCLSYENTKSIHCDPPKFKDLSTSVEVLFTGIKVIDLLAPYLKGGKIGLFGGAGVGKTVLIMELINNIAKKHNGFSVFAGVGERTREGNDLLREMIESGVIRYGKEFEEGMRLGEWDLSKIDYEELKKSQATLVFGQMNEPPGARSSVVLSGLTIAEAFRDQSGSDGHDVLFFIDNIFRFTQAGSEVSALLGRMPSAVGYQPTLATEMGKMQERITSTKNGSITSIQAVYVPADDLTDPAPATTFTFLDATTVLDRKIFELGIYPAVDPLNSVSRILDPNVLGQEHYDTAQKVKQLLQRYKELQDIIAILGMEELSEEDKLVVNRARRVQRFLSQPFFMAEAFSGIPGVMVSREDTIKGFNMLMNGDVDYLPEQAFLNVGTIEDAIEKGKKLTALT.

155-162 (GGAGVGKT) lines the ATP pocket.

Belongs to the ATPase alpha/beta chains family. F-type ATPases have 2 components, CF(1) - the catalytic core - and CF(0) - the membrane proton channel. CF(1) has five subunits: alpha(3), beta(3), gamma(1), delta(1), epsilon(1). CF(0) has three main subunits: a(1), b(2) and c(9-12). The alpha and beta chains form an alternating ring which encloses part of the gamma chain. CF(1) is attached to CF(0) by a central stalk formed by the gamma and epsilon chains, while a peripheral stalk is formed by the delta and b chains.

The protein resides in the cell inner membrane. It catalyses the reaction ATP + H2O + 4 H(+)(in) = ADP + phosphate + 5 H(+)(out). Functionally, produces ATP from ADP in the presence of a proton gradient across the membrane. The catalytic sites are hosted primarily by the beta subunits. This Azobacteroides pseudotrichonymphae genomovar. CFP2 protein is ATP synthase subunit beta.